A 101-amino-acid chain; its full sequence is MFDQTTNTEVHQLTVGKIETANGTIKPQLLRDAVKRAVTNFFAQLDGQEAQEVYEMVLSEVEAPLLDIIMQHTRGNQTRAANMLGINRGTLRKKLKKYGMN.

The H-T-H motif DNA-binding region spans 77 to 96; sequence QTRAANMLGINRGTLRKKLK.

It belongs to the transcriptional regulatory Fis family. Homodimer.

Functionally, activates ribosomal RNA transcription. Plays a direct role in upstream activation of rRNA promoters. In Shewanella baltica (strain OS223), this protein is DNA-binding protein Fis.